A 401-amino-acid polypeptide reads, in one-letter code: 3-oxoadipyl-CoA/3-oxo-5,6-dehydrosuberyl-CoA thiolase (401 aa).

C90 serves as the catalytic Acyl-thioester intermediate. Catalysis depends on proton acceptor residues H357 and C387.

Belongs to the thiolase-like superfamily. Thiolase family.

The catalysed reaction is succinyl-CoA + acetyl-CoA = 3-oxoadipyl-CoA + CoA. It catalyses the reaction 2,3-didehydroadipoyl-CoA + acetyl-CoA = 3-oxo-5,6-didehydrosuberyl-CoA + CoA. Its pathway is aromatic compound metabolism; phenylacetate degradation. Catalyzes the thiolytic cleavage of the beta-keto C8 intermediate 3-oxo-5,6-dehydrosuberyl-CoA with CoA to yield the C6 intermediate 2,3-dehydroadipyl-CoA and acetyl-CoA. Besides it catalyzes also the last step of the pathway, in which 3-oxoadipyl-CoA similarly is cleaved to acetyl-CoA and succinyl-CoA. The chain is 3-oxoadipyl-CoA/3-oxo-5,6-dehydrosuberyl-CoA thiolase (paaJ) from Escherichia coli (strain K12).